Here is a 546-residue protein sequence, read N- to C-terminus: Methionine--tRNA ligase (546 aa).

The short motif at 15-25 is the 'HIGH' region element; that stretch reads PYANGPIHLGH. Cys-146, Cys-149, Cys-159, and Cys-162 together coordinate Zn(2+). Residues 332–336 carry the 'KMSKS' region motif; that stretch reads KMSKS. An ATP-binding site is contributed by Lys-335.

The protein belongs to the class-I aminoacyl-tRNA synthetase family. MetG type 1 subfamily. As to quaternary structure, monomer. Zn(2+) serves as cofactor.

It localises to the cytoplasm. It carries out the reaction tRNA(Met) + L-methionine + ATP = L-methionyl-tRNA(Met) + AMP + diphosphate. Its function is as follows. Is required not only for elongation of protein synthesis but also for the initiation of all mRNA translation through initiator tRNA(fMet) aminoacylation. This chain is Methionine--tRNA ligase, found in Coxiella burnetii (strain Dugway 5J108-111).